The following is a 658-amino-acid chain: Glycogen debranching enzyme (658 aa).

Aspartate 336 (nucleophile) is an active-site residue. Glutamate 371 serves as the catalytic Proton donor. Residues 459-484 (EANGEENRDGTNSNYSDNHGKEGLGG) are disordered.

Belongs to the glycosyl hydrolase 13 family.

The enzyme catalyses Hydrolysis of (1-&gt;6)-alpha-D-glucosidic linkages to branches with degrees of polymerization of three or four glucose residues in limit dextrin.. It functions in the pathway glycan degradation; glycogen degradation. Removes maltotriose and maltotetraose chains that are attached by 1,6-alpha-linkage to the limit dextrin main chain, generating a debranched limit dextrin. The chain is Glycogen debranching enzyme from Salmonella enteritidis PT4 (strain P125109).